Consider the following 298-residue polypeptide: Zinc finger protein-like 1 homolog (298 aa).

Residues 1-43 (MGLCKCPKRLVTNQFCFEHRVNVCEHCMVQSHPKCIVQSYLQW) form a B box-type; degenerate zinc finger. The RING-type; atypical zinc finger occupies 53 to 101 (CTLCGTTLEQGDCVRLVCYHVFHWDCLNARQAALPANTAPRGHQCPACT). Residues 199 to 230 (AGDYASSRRPLLPRQSPIGGTDRDDNKYQRRT) form a disordered region. Position 214 is a phosphoserine (Ser-214). Residues 255–275 (WFLVTAGILAFVLFVYLMAWL) traverse the membrane as a helical segment.

The protein belongs to the ZFPL1 family.

It localises to the membrane. The polypeptide is Zinc finger protein-like 1 homolog (Drosophila erecta (Fruit fly)).